The following is a 418-amino-acid chain: Homocitrate synthase, mitochondrial (418 aa).

Over residues 1–10 (MSVSEANGTE) the composition is skewed to polar residues. Residues 1–25 (MSVSEANGTETIKPPMNGNPYGPNP) form a disordered region. The span at 14-25 (PPMNGNPYGPNP) shows a compositional bias: low complexity. The Pyruvate carboxyltransferase domain maps to 35 to 288 (FSIIESTLRE…THKYKLNQLR (254 aa)). 2-oxoglutarate contacts are provided by Arg-43, Glu-44, and His-103. Glu-44 provides a ligand contact to L-lysine. Residue Glu-44 participates in Zn(2+) binding. Asp-123 lines the L-lysine pocket. The 2-oxoglutarate site is built by Arg-163, Ser-165, Thr-197, His-224, and His-226. Thr-197 lines the L-lysine pocket. Residues His-224 and His-226 each contribute to the Zn(2+) site. The active-site Proton acceptor is His-321.

This sequence belongs to the alpha-IPM synthase/homocitrate synthase family. Homocitrate synthase LYS20/LYS21 subfamily. The cofactor is Mg(2+). Requires Mn(2+) as cofactor. It depends on Zn(2+) as a cofactor. Co(2+) is required as a cofactor.

Its subcellular location is the mitochondrion. The catalysed reaction is acetyl-CoA + 2-oxoglutarate + H2O = (2R)-homocitrate + CoA + H(+). Its pathway is amino-acid biosynthesis; L-lysine biosynthesis via AAA pathway; L-alpha-aminoadipate from 2-oxoglutarate: step 1/5. With respect to regulation, the activity is controled by feedback inhibition by L-lysine, the final product of the pathway that acts as a competitive inhibitor of 2-oxoglutarate. Its function is as follows. Catalyzes the aldol-type condensation of 2-oxoglutarate with acetyl-CoA to yield homocitrate, the first step of the alpha-aminoadipate (AAA) lysine biosynthesis pathway. This Schizosaccharomyces pombe (strain 972 / ATCC 24843) (Fission yeast) protein is Homocitrate synthase, mitochondrial.